Consider the following 103-residue polypeptide: Large ribosomal subunit protein bL21 (103 aa).

The protein belongs to the bacterial ribosomal protein bL21 family. As to quaternary structure, part of the 50S ribosomal subunit. Contacts protein L20.

In terms of biological role, this protein binds to 23S rRNA in the presence of protein L20. This is Large ribosomal subunit protein bL21 from Lactobacillus delbrueckii subsp. bulgaricus (strain ATCC 11842 / DSM 20081 / BCRC 10696 / JCM 1002 / NBRC 13953 / NCIMB 11778 / NCTC 12712 / WDCM 00102 / Lb 14).